Reading from the N-terminus, the 91-residue chain is ATP synthase subunit c 2 (91 aa).

The next 2 membrane-spanning stretches (helical) occupy residues 4-24 (FSMCVLGAAIGMAIGTLGTGI) and 53-73 (IGLAMIESLAIYALVICLIIL).

The protein belongs to the ATPase C chain family. In terms of assembly, F-type ATPases have 2 components, F(1) - the catalytic core - and F(0) - the membrane proton channel. F(1) has five subunits: alpha(3), beta(3), gamma(1), delta(1), epsilon(1). F(0) has three main subunits: a(1), b(2) and c(10-14). The alpha and beta chains form an alternating ring which encloses part of the gamma chain. F(1) is attached to F(0) by a central stalk formed by the gamma and epsilon chains, while a peripheral stalk is formed by the delta and b chains.

It is found in the cell inner membrane. Functionally, f(1)F(0) ATP synthase produces ATP from ADP in the presence of a proton or sodium gradient. F-type ATPases consist of two structural domains, F(1) containing the extramembraneous catalytic core and F(0) containing the membrane proton channel, linked together by a central stalk and a peripheral stalk. During catalysis, ATP synthesis in the catalytic domain of F(1) is coupled via a rotary mechanism of the central stalk subunits to proton translocation. Its function is as follows. Key component of the F(0) channel; it plays a direct role in translocation across the membrane. A homomeric c-ring of between 10-14 subunits forms the central stalk rotor element with the F(1) delta and epsilon subunits. This Pelobacter propionicus (strain DSM 2379 / NBRC 103807 / OttBd1) protein is ATP synthase subunit c 2.